A 294-amino-acid chain; its full sequence is Maltose/maltodextrin import ATP-binding protein MalK (294 aa).

The ABC transporter domain occupies 4-233 (VQLRNVTKAW…PADRFVAGFI (230 aa)). ATP is bound at residue 36-43 (GPSGCGKS).

The protein belongs to the ABC transporter superfamily. Maltooligosaccharide importer (TC 3.A.1.1.1) family. As to quaternary structure, the complex is composed of two ATP-binding proteins (MalK), two transmembrane proteins (MalG and MalK) and a solute-binding protein (MalE).

It is found in the cell inner membrane. The enzyme catalyses D-maltose(out) + ATP + H2O = D-maltose(in) + ADP + phosphate + H(+). Part of the ABC transporter complex MalEFGK involved in maltose/maltodextrin import. Responsible for energy coupling to the transport system. This chain is Maltose/maltodextrin import ATP-binding protein MalK, found in Klebsiella aerogenes (Enterobacter aerogenes).